A 273-amino-acid chain; its full sequence is Orotidine 5'-phosphate decarboxylase (273 aa).

Catalysis depends on Lys-96, which acts as the Proton donor.

It belongs to the OMP decarboxylase family. Type 2 subfamily.

The catalysed reaction is orotidine 5'-phosphate + H(+) = UMP + CO2. The protein operates within pyrimidine metabolism; UMP biosynthesis via de novo pathway; UMP from orotate: step 2/2. The polypeptide is Orotidine 5'-phosphate decarboxylase (Flavobacterium johnsoniae (strain ATCC 17061 / DSM 2064 / JCM 8514 / BCRC 14874 / CCUG 350202 / NBRC 14942 / NCIMB 11054 / UW101) (Cytophaga johnsonae)).